A 368-amino-acid chain; its full sequence is Peptide chain release factor 2 (368 aa).

Glutamine 248 is subject to N5-methylglutamine.

Belongs to the prokaryotic/mitochondrial release factor family. In terms of processing, methylated by PrmC. Methylation increases the termination efficiency of RF2.

The protein resides in the cytoplasm. Its function is as follows. Peptide chain release factor 2 directs the termination of translation in response to the peptide chain termination codons UGA and UAA. This is Peptide chain release factor 2 from Corynebacterium glutamicum (strain R).